A 487-amino-acid polypeptide reads, in one-letter code: Protein nucleotidyltransferase YdiU (487 aa).

Residues Gly90, Gly92, Arg93, Lys113, Asp125, Gly126, Arg176, and Arg183 each contribute to the ATP site. The active-site Proton acceptor is Asp252. The Mg(2+) site is built by Asn253 and Asp262. Asp262 is a binding site for ATP.

It belongs to the SELO family. The cofactor is Mg(2+). Mn(2+) is required as a cofactor.

It catalyses the reaction L-seryl-[protein] + ATP = 3-O-(5'-adenylyl)-L-seryl-[protein] + diphosphate. The catalysed reaction is L-threonyl-[protein] + ATP = 3-O-(5'-adenylyl)-L-threonyl-[protein] + diphosphate. It carries out the reaction L-tyrosyl-[protein] + ATP = O-(5'-adenylyl)-L-tyrosyl-[protein] + diphosphate. The enzyme catalyses L-histidyl-[protein] + UTP = N(tele)-(5'-uridylyl)-L-histidyl-[protein] + diphosphate. It catalyses the reaction L-seryl-[protein] + UTP = O-(5'-uridylyl)-L-seryl-[protein] + diphosphate. The catalysed reaction is L-tyrosyl-[protein] + UTP = O-(5'-uridylyl)-L-tyrosyl-[protein] + diphosphate. Its function is as follows. Nucleotidyltransferase involved in the post-translational modification of proteins. It can catalyze the addition of adenosine monophosphate (AMP) or uridine monophosphate (UMP) to a protein, resulting in modifications known as AMPylation and UMPylation. The protein is Protein nucleotidyltransferase YdiU of Azotobacter vinelandii (strain DJ / ATCC BAA-1303).